The primary structure comprises 437 residues: Methylenetetrahydrofolate--tRNA-(uracil-5-)-methyltransferase TrmFO (437 aa).

10-15 (GAGLAG) contributes to the FAD binding site.

This sequence belongs to the MnmG family. TrmFO subfamily. It depends on FAD as a cofactor.

The protein localises to the cytoplasm. The catalysed reaction is uridine(54) in tRNA + (6R)-5,10-methylene-5,6,7,8-tetrahydrofolate + NADH + H(+) = 5-methyluridine(54) in tRNA + (6S)-5,6,7,8-tetrahydrofolate + NAD(+). It catalyses the reaction uridine(54) in tRNA + (6R)-5,10-methylene-5,6,7,8-tetrahydrofolate + NADPH + H(+) = 5-methyluridine(54) in tRNA + (6S)-5,6,7,8-tetrahydrofolate + NADP(+). Its function is as follows. Catalyzes the folate-dependent formation of 5-methyl-uridine at position 54 (M-5-U54) in all tRNAs. This chain is Methylenetetrahydrofolate--tRNA-(uracil-5-)-methyltransferase TrmFO, found in Pelotomaculum thermopropionicum (strain DSM 13744 / JCM 10971 / SI).